Here is a 299-residue protein sequence, read N- to C-terminus: Protease HtpX homolog (299 aa).

2 consecutive transmembrane segments (helical) span residues 14–34 (IVLL…VGYL) and 39–59 (LVGG…SMIF). His143 is a binding site for Zn(2+). Glu144 is a catalytic residue. His147 contacts Zn(2+). Transmembrane regions (helical) follow at residues 158 to 178 (IAVA…RMMW) and 198 to 218 (IILL…ASLV). Zn(2+) is bound at residue Glu227.

Belongs to the peptidase M48B family. Zn(2+) is required as a cofactor.

Its subcellular location is the cell membrane. This is Protease HtpX homolog from Streptococcus mutans serotype c (strain ATCC 700610 / UA159).